The chain runs to 261 residues: tRNA pseudouridine synthase A (261 aa).

D51 acts as the Nucleophile in catalysis. Substrate is bound at residue Y109.

It belongs to the tRNA pseudouridine synthase TruA family. As to quaternary structure, homodimer.

It carries out the reaction uridine(38/39/40) in tRNA = pseudouridine(38/39/40) in tRNA. Functionally, formation of pseudouridine at positions 38, 39 and 40 in the anticodon stem and loop of transfer RNAs. The chain is tRNA pseudouridine synthase A from Shewanella pealeana (strain ATCC 700345 / ANG-SQ1).